Reading from the N-terminus, the 506-residue chain is Peptidyl-prolyl cis-trans isomerase CYP59 (506 aa).

In terms of domain architecture, PPIase cyclophilin-type spans 1 to 161 (MSVLIVTSLG…KNIRIKHTHI (161 aa)). The RRM domain occupies 243–321 (NVLFVCKLNP…RRIHVDFSQS (79 aa)). Residues 341 to 357 (GCFKCGSTDHIAKDCVG) form a CCHC-type zinc finger. 2 stretches are compositionally biased toward basic and acidic residues: residues 388-404 (ETPKHNSHERERSEKIQ) and 412-506 (GEGK…RRDR). Residues 388–506 (ETPKHNSHER…REARHERRDR (119 aa)) are disordered.

The protein belongs to the cyclophilin-type PPIase family. Component of the BZR1 complex. Interacts with NRPB1 (via CTD domain), SCL28, SCL30, SCL30A, SCL33, SC35, SR30, SR34, RSZ21, RS2Z33, RS31 and RS40. As to expression, ubiquitous.

The protein localises to the nucleus. The enzyme catalyses [protein]-peptidylproline (omega=180) = [protein]-peptidylproline (omega=0). Its function is as follows. PPIases accelerate the folding of proteins. It catalyzes the cis-trans isomerization of proline imidic peptide bonds in oligopeptides. Influences somehow regulation of RNA pol II (CTD) phosphorylation. Binds RNA with preferences for GC-rich sequences. Probably involved in activities connecting transcription and pre-mRNA processing. Involved in brassinostroid response. The protein is Peptidyl-prolyl cis-trans isomerase CYP59 (CYP59) of Arabidopsis thaliana (Mouse-ear cress).